A 215-amino-acid chain; its full sequence is uncharacterized protein (215 aa).

5 helical membrane-spanning segments follow: residues 9-29, 50-70, 77-97, 107-127, and 160-180; these read WTFYFAGLIILAFGVSLTIEG, LTVGQWSIIIGALIVGFTSLF, IGALLNMVLIGVFIDFFNFIL, IIVFSLGVVLIGYGVGVYVSA, and ILFAAWGMGGPIGFGTILTAI.

The protein localises to the cell membrane. This is an uncharacterized protein from Bacillus subtilis (strain 168).